Reading from the N-terminus, the 429-residue chain is Keratin, type I cytoskeletal 20 (429 aa).

A disordered region spans residues 1 to 26 (MDFSRRSFHRSLSSSSQGPALSTSGS). The head stretch occupies residues 1–74 (MDFSRRSFHR…SNGGDLFGGN (74 aa)). The span at 10-26 (RSLSSSSQGPALSTSGS) shows a compositional bias: low complexity. 3 positions are modified to phosphoserine: Ser13, Ser16, and Ser26. Positions 75 to 110 (EKLAMQNLNDRLASYLEKVRSLEQSNSKLEAQIKQW) are coil 1A. The region spanning 75–386 (EKLAMQNLND…RLLEGEDIKT (312 aa)) is the IF rod domain. Residues 111 to 128 (YETNAPSTIRDYSSYYAQ) form a linker 1 region. The segment at 129 to 220 (IKELQDQIKD…KEHQEEVEVL (92 aa)) is coil 1B. The interval 221–243 (RRQLGNNVNVEVDAAPGLNLGEI) is linker 12. The tract at residues 244 to 382 (MNEMRQKYEI…ATYRRLLEGE (139 aa)) is coil 2. Residues 383-429 (DIKTTEYQLNTLEAKDIKKTRKIKTVVEEVVDGKVVSSEVKEIEENI) form a tail region.

Belongs to the intermediate filament family. In terms of assembly, heterotetramer of two type I and two type II keratins. Associates with KRT8. Hyperphosphorylation at Ser-13 occurs during the early stages of apoptosis but becomes less prominent during the later stages. Phosphorylation at Ser-13 also increases in response to stress brought on by cell injury. Post-translationally, proteolytically cleaved by caspases during apoptosis. Cleavage occurs at Asp-233. In terms of tissue distribution, expressed predominantly in the intestinal epithelium in differentiated villus cells.

Its function is as follows. Plays a significant role in maintaining keratin filament organization in intestinal epithelia. When phosphorylated, plays a role in the secretion of mucin in the small intestine. The polypeptide is Keratin, type I cytoskeletal 20 (Krt20) (Rattus norvegicus (Rat)).